The primary structure comprises 109 residues: Nucleoid-associated protein MADE_1013280 (109 aa).

The segment at 86-109 is disordered; that stretch reads TSKEKMGDVTGGMPLPPGFKMPGF. A compositionally biased stretch (pro residues) spans 99–109; that stretch reads PLPPGFKMPGF.

Belongs to the YbaB/EbfC family. As to quaternary structure, homodimer.

Its subcellular location is the cytoplasm. The protein resides in the nucleoid. Its function is as follows. Binds to DNA and alters its conformation. May be involved in regulation of gene expression, nucleoid organization and DNA protection. The polypeptide is Nucleoid-associated protein MADE_1013280 (Alteromonas mediterranea (strain DSM 17117 / CIP 110805 / LMG 28347 / Deep ecotype)).